We begin with the raw amino-acid sequence, 138 residues long: uncharacterized protein (138 aa).

This sequence belongs to the IIV-3 015R family.

This is an uncharacterized protein from Simulium iridescent virus (IIV-22).